Reading from the N-terminus, the 1216-residue chain is Protein WWC3 (1216 aa).

A disordered region spans residues 1–63 (MPWLSGGRRR…RESAELPLPA (63 aa)). Over residues 21–51 (EPPPSAQPQREPPPAPPAAVPTPPAPSAPPP) the composition is skewed to pro residues. 2 consecutive WW domains span residues 59 to 92 (LPLPAGWEEARDYDGRVFYIDHNTRQTSWIDPRD) and 106 to 139 (DELPLGWETVYDKQIGVYYMDHINKLTQIEDPRE). Coiled coils occupy residues 164–250 (KEIY…TLQE) and 354–468 (DRVR…EATR). 3 disordered regions span residues 487–508 (VSSGSSRGSLASSRGSLASSRG), 546–612 (GRDA…ADSC), and 634–668 (DLPGMAALQPHGVPGDGEGPHERGPPPASAPVGGT). Over residues 570-598 (PQSLASLSSRSSLSSLSPPSSPLDTPFLP) the composition is skewed to low complexity. One can recognise a C2 domain in the interval 722-847 (SNGDPQIHVG…SLSEMQLRWH (126 aa)). Positions 885 to 936 (DAVTVLLARTTAQLQAVERELAEERAKLEYTEEEVLEMERKEEQAEAISERS) form a coiled coil. The interaction with PRKCZ stretch occupies residues 1060-1079 (SPFVRNTLERRTLRYKQSCR). Positions 1091–1160 (LDLELDLQAS…RQTRQTKLDY (70 aa)) form a coiled coil.

The protein belongs to the WWC family. In terms of assembly, forms homodimers and heterodimers with WWC1 and WWC2. Interacts with DLC1 and PRKCZ. Interacts (via WW domains) with LATS1 and LATS2.

The protein localises to the cytoplasm. The protein resides in the cytosol. Functionally, regulator of the Hippo signaling pathway, also known as the Salvador-Warts-Hippo (SWH) pathway. Enhances phosphorylation of LATS1 and YAP1 and negatively regulates cell proliferation and organ growth due to a suppression of the transcriptional activity of YAP1, the major effector of the Hippo pathway. The sequence is that of Protein WWC3 from Homo sapiens (Human).